We begin with the raw amino-acid sequence, 203 residues long: Coupling of ubiquitin conjugation to ER degradation protein 1 (203 aa).

At 1-6 (MEDSRL) the chain is on the lumenal side. Residues 7–23 (LITLILVFGVIFLKKFF) form a helical membrane-spanning segment. The Cytoplasmic segment spans residues 24 to 203 (QSNQHPSAQR…SDKDLQSLLT (180 aa)). The interval 36–61 (ATGVNAHGRPQGSTQNALRRTGRVNG) is disordered. Positions 65–107 (VTTQMVETVQNLAPNLHPEQIRYSLENTGSVEETVERYLRGDE) constitute a CUE domain.

Belongs to the CUE1 family. As to quaternary structure, forms a heterodimer with UBC7. Interacts with SSM4/DOA10 and UBX2/SEL1.

The protein resides in the endoplasmic reticulum membrane. Component of the endoplasmic reticulum-associated protein degradation (ERAD) pathway. Recruits the soluble ubiquitin-conjugating enzyme UBC7 to the cytoplasmic face of the endoplasmic reticulum membrane where it functions in degradation of misfolded or regulated proteins localized in the endoplasmic reticulum (ER) lumen or membrane via the ubiquitin-proteasome system. Targets the E2 conjugating enzyme UBC7 to the DOA10 ubiquitin ligase complex, which is part of the ERAD-C pathway responsible for the rapid degradation of membrane proteins with misfolded cytoplasmic domains, and to the HRD1 ubiquitin ligase complex, which is part of the ERAD-L and ERAD-M pathways responsible for the rapid degradation of soluble lumenal and membrane proteins with misfolded lumenal domains (ERAD-L), or ER-membrane proteins with misfolded transmembrane domains (ERAD-M). Also has a role in cold adaptation, perhaps through effects on sterol biosynthesis. The polypeptide is Coupling of ubiquitin conjugation to ER degradation protein 1 (CUE1) (Saccharomyces cerevisiae (strain ATCC 204508 / S288c) (Baker's yeast)).